A 266-amino-acid chain; its full sequence is BTB/POZ domain-containing protein KCTD2 (266 aa).

The residue at position 2 (Ala-2) is an N-acetylalanine. The interval 38-79 (GRHPADTAASPPPPRTAGARARTSGADGRRRGRPLGPAQRGR) is disordered. Over residues 53–63 (TAGARARTSGA) the composition is skewed to low complexity. In terms of domain architecture, BTB spans 76–174 (QRGRYLLRDT…LVKERIRDNE (99 aa)).

This chain is BTB/POZ domain-containing protein KCTD2 (Kctd2), found in Mus musculus (Mouse).